We begin with the raw amino-acid sequence, 364 residues long: Aminomethyltransferase (364 aa).

The protein belongs to the GcvT family. In terms of assembly, the glycine cleavage system is composed of four proteins: P, T, L and H.

It catalyses the reaction N(6)-[(R)-S(8)-aminomethyldihydrolipoyl]-L-lysyl-[protein] + (6S)-5,6,7,8-tetrahydrofolate = N(6)-[(R)-dihydrolipoyl]-L-lysyl-[protein] + (6R)-5,10-methylene-5,6,7,8-tetrahydrofolate + NH4(+). Its function is as follows. The glycine cleavage system catalyzes the degradation of glycine. The sequence is that of Aminomethyltransferase from Shigella boydii serotype 18 (strain CDC 3083-94 / BS512).